The primary structure comprises 435 residues: Ribosomal protein uS12 methylthiotransferase RimO (435 aa).

Residues 3–113 (HKVGFVSLGC…VVNAVHQYLP (111 aa)) form the MTTase N-terminal domain. [4Fe-4S] cluster contacts are provided by Cys12, Cys48, Cys77, Cys144, Cys148, and Cys151. The 238-residue stretch at 130–367 (LTPRHYAYLK…MQVQAEISRN (238 aa)) folds into the Radical SAM core domain. Positions 370–435 (KNKIGSTQTV…DDYDLYASLV (66 aa)) constitute a TRAM domain.

The protein belongs to the methylthiotransferase family. RimO subfamily. [4Fe-4S] cluster serves as cofactor.

Its subcellular location is the cytoplasm. The catalysed reaction is L-aspartate(89)-[ribosomal protein uS12]-hydrogen + (sulfur carrier)-SH + AH2 + 2 S-adenosyl-L-methionine = 3-methylsulfanyl-L-aspartate(89)-[ribosomal protein uS12]-hydrogen + (sulfur carrier)-H + 5'-deoxyadenosine + L-methionine + A + S-adenosyl-L-homocysteine + 2 H(+). In terms of biological role, catalyzes the methylthiolation of an aspartic acid residue of ribosomal protein uS12. The sequence is that of Ribosomal protein uS12 methylthiotransferase RimO from Legionella pneumophila subsp. pneumophila (strain Philadelphia 1 / ATCC 33152 / DSM 7513).